The chain runs to 126 residues: Adenosine 5'-monophosphoramidase HINT1 (126 aa).

Residue A2 is modified to N-acetylalanine. The HIT domain maps to 18–126 (IFGKIIRKEI…GGRQMHWPPG (109 aa)). K21 and K30 each carry N6-acetyllysine. Residue 43–44 (DI) participates in AMP binding. Phosphoserine occurs at positions 45 and 72. Residues N99, 105–107 (GQS), and 112–114 (HLH) contribute to the AMP site. The short motif at 110–114 (HVHLH) is the Histidine triad motif element. H112 serves as the catalytic Tele-AMP-histidine intermediate.

It belongs to the HINT family. As to quaternary structure, homodimer. Interacts with CDK7. Interacts with RUVBL1 and RUVBL2 and is associated with the LEF1/TCF1-CTNNB1 complex and with a KAT5 histone acetyltransferase complex. Identified in a complex with MITF and CTNNB1. Interacts with CDC34 and RBX1, and is part of a SCF (SKP2-CUL1-F-box protein) E3 ubiquitin-protein ligase complex. Interacts with SUMO1, SUMO2 and RGS17. Interacts with the Ten-1 ICD form of TENM1. Interacts with CALM1; interaction increases in the presence of calcium ions. In terms of tissue distribution, widely expressed.

The protein resides in the cytoplasm. Its subcellular location is the nucleus. The catalysed reaction is adenosine 5'-phosphoramidate + H2O = AMP + NH4(+). Its function is as follows. Exhibits adenosine 5'-monophosphoramidase activity, hydrolyzing purine nucleotide phosphoramidates with a single phosphate group such as adenosine 5'monophosphoramidate (AMP-NH2) to yield AMP and NH2. Hydrolyzes adenosine 5'monophosphomorpholidate (AMP-morpholidate) and guanosine 5'monophosphomorpholidate (GMP-morpholidate). Hydrolyzes lysyl-AMP (AMP-N-epsilon-(N-alpha-acetyl lysine methyl ester)) generated by lysine tRNA ligase, as well as Met-AMP, His-AMP and Asp-AMP, lysyl-GMP (GMP-N-epsilon-(N-alpha-acetyl lysine methyl ester)) and AMP-N-alanine methyl ester. Hydrolyzes 3-indolepropionic acyl-adenylate, tryptamine adenosine phosphoramidate monoester and other fluorogenic purine nucleoside tryptamine phosphoramidates in vitro. Can also convert adenosine 5'-O-phosphorothioate and guanosine 5'-O-phosphorothioate to the corresponding nucleoside 5'-O-phosphates with concomitant release of hydrogen sulfide. In addition, functions as scaffolding protein that modulates transcriptional activation by the LEF1/TCF1-CTNNB1 complex and by the complex formed with MITF and CTNNB1. Modulates p53/TP53 levels and p53/TP53-mediated apoptosis. Modulates proteasomal degradation of target proteins by the SCF (SKP2-CUL1-F-box protein) E3 ubiquitin-protein ligase complex. Also exhibits SUMO-specific isopeptidase activity, deconjugating SUMO1 from RGS17. Deconjugates SUMO1 from RANGAP1. This Homo sapiens (Human) protein is Adenosine 5'-monophosphoramidase HINT1 (HINT1).